The primary structure comprises 494 residues: Splicing regulatory glutamine/lysine-rich protein 1 (494 aa).

The 77-residue stretch at 69-145 folds into the RRM domain; sequence RTVYVGNLNS…RPLKINHSNN (77 aa). A phosphoserine mark is found at serine 174 and serine 187. Positions 176–494 are disordered; the sequence is ISAAIEPESG…ERLCSTADAV (319 aa). Residues 183–192 are compositionally biased toward basic and acidic residues; sequence ESGKSNERKG. Basic residues-rich tracts occupy residues 193-230 and 238-262; these read GRSRSHTRSKSRSSSKSHSRRKRSQSKHRSRSHNRSRS and SKSPHKKRSKSRERRKSRSRSRSRD. Over residues 263 to 340 the composition is skewed to basic and acidic residues; the sequence is KRKDTREKVK…DRSKEADEKR (78 aa). Threonine 348 is modified (phosphothreonine). The segment covering 357–373 has biased composition (basic residues); that stretch reads RRSRSASRERRRRRSRS. Basic and acidic residues-rich tracts occupy residues 404–453 and 463–474; these read REKE…KEAD and KDTARTEEESKA.

Belongs to the splicing factor SR family. Interacts with SREK1IP1. Homodimer. Binds SFRS1, SFRS2, SFRS3 and SFRS6. Interacts with the spliceosome. As to expression, ubiquitous. Detected in liver, brain, lung, spleen, testis and pancreas.

The protein localises to the nucleus. In terms of biological role, participates in the regulation of alternative splicing by modulating the activity of other splice facors. Inhibits the splicing activity of SFRS1, SFRS2 and SFRS6. Augments the splicing activity of SFRS3. The chain is Splicing regulatory glutamine/lysine-rich protein 1 (Srek1) from Rattus norvegicus (Rat).